A 260-amino-acid chain; its full sequence is Snake venom serine protease pallabin (260 aa).

The signal sequence occupies residues 1–18 (MVLIRVLANLLILQLSYA). Residues 19 to 24 (QKSSKL) constitute a propeptide that is removed on maturation. Residues 25–251 (VIGGDECNIN…HLDWIENIIA (227 aa)) form the Peptidase S1 domain. 6 disulfides stabilise this stretch: C31-C163, C50-C66, C98-C258, C142-C212, C174-C191, and C202-C227. H65 functions as the Charge relay system in the catalytic mechanism. N103 is a glycosylation site (N-linked (GlcNAc...) asparagine). Catalysis depends on D110, which acts as the Charge relay system. The active-site Charge relay system is the S206.

The protein belongs to the peptidase S1 family. Snake venom subfamily. In terms of assembly, monomer. In terms of tissue distribution, expressed by the venom gland.

The protein localises to the secreted. Its function is as follows. Snake venom serine protease that may act in the hemostasis system of the prey. The chain is Snake venom serine protease pallabin (JZTHR5) from Gloydius halys (Chinese water mocassin).